Consider the following 77-residue polypeptide: NAD(P)H-quinone oxidoreductase subunit L (77 aa).

The next 2 helical transmembrane spans lie at 12–32 (FVAY…ILFY) and 47–67 (LGVY…SPFL).

It belongs to the complex I NdhL subunit family. NDH-1 can be composed of about 15 different subunits; different subcomplexes with different compositions have been identified which probably have different functions.

Its subcellular location is the cellular thylakoid membrane. It carries out the reaction a plastoquinone + NADH + (n+1) H(+)(in) = a plastoquinol + NAD(+) + n H(+)(out). The enzyme catalyses a plastoquinone + NADPH + (n+1) H(+)(in) = a plastoquinol + NADP(+) + n H(+)(out). Functionally, NDH-1 shuttles electrons from an unknown electron donor, via FMN and iron-sulfur (Fe-S) centers, to quinones in the respiratory and/or the photosynthetic chain. The immediate electron acceptor for the enzyme in this species is believed to be plastoquinone. Couples the redox reaction to proton translocation, and thus conserves the redox energy in a proton gradient. Cyanobacterial NDH-1 also plays a role in inorganic carbon-concentration. This is NAD(P)H-quinone oxidoreductase subunit L from Prochlorococcus marinus (strain MIT 9515).